A 1026-amino-acid polypeptide reads, in one-letter code: Multidrug resistance protein MdtC (1026 aa).

The Cytoplasmic portion of the chain corresponds to 1–6; the sequence is MRFFAL. A helical membrane pass occupies residues 7–29; it reads FIYRPVATILIAAAITLCGILGF. At 30-335 the chain is on the periplasmic side; the sequence is RLLPVAPLPQ…TIRASLQEVE (306 aa). The chain crosses the membrane as a helical span at residues 336 to 353; that stretch reads ETLAISVALVILVVFLFL. At 354–359 the chain is on the cytoplasmic side; sequence RSGRAT. Residues 360–379 traverse the membrane as a helical segment; sequence LIPAVAVPVSLIGTFAAMYL. Over 380-388 the chain is Periplasmic; sequence CGFSLNNLS. Residues 389 to 411 form a helical membrane-spanning segment; that stretch reads LMALTIATGFVVDDAIVVLENIA. Over 412-430 the chain is Cytoplasmic; sequence RHLEAGMKPLQAALQGTRE. Residues 431-453 traverse the membrane as a helical segment; that stretch reads VGFTVISMSLSLVAVFLPLLLMG. Residues 454-467 are Periplasmic-facing; the sequence is GLPGRLLREFAVTL. The chain crosses the membrane as a helical span at residues 468-490; sequence SVAIGISLVVSLTLTPMMCGWML. Residues 491–852 lie on the Cytoplasmic side of the membrane; the sequence is KSSKPRTQPR…QVFQQTMNSQ (362 aa). Residues 853–875 form a helical membrane-spanning segment; it reads LILIVAAIATVYIVLGILYESYV. At 876-894 the chain is on the periplasmic side; sequence HPLTILSTLPSAGVGALLA. Residues 895 to 917 form a helical membrane-spanning segment; sequence LELFNAPFSLIALIGIMLLIGIV. The Cytoplasmic segment spans residues 918-947; the sequence is KKNAIMMVDFALEAQRSGGLTPEQAIFQAC. A helical transmembrane segment spans residues 948-970; it reads LLRFRPIMMTTLAALFGALPLVL. Residues 971–984 are Periplasmic-facing; sequence SGGDGSELRQPLGI. The chain crosses the membrane as a helical span at residues 985–1007; sequence TIVGGLVMSQLLTLYTTPVVYLF. The Cytoplasmic segment spans residues 1008-1026; that stretch reads FDRLRLRFSRKNSKPVVEI.

The protein belongs to the resistance-nodulation-cell division (RND) (TC 2.A.6) family. MdtC subfamily. In terms of assembly, part of a tripartite efflux system composed of MdtA, MdtB and MdtC. MdtC forms a heteromultimer with MdtB.

It is found in the cell inner membrane. The sequence is that of Multidrug resistance protein MdtC from Salmonella typhimurium (strain LT2 / SGSC1412 / ATCC 700720).